The chain runs to 662 residues: Methyl-accepting chemotaxis protein TlpB (662 aa).

Over 1–16 (MGKFIQWIKQPSISKP) the chain is Cytoplasmic. A helical membrane pass occupies residues 17–37 (LIAAFLAVLILPVGVLAYFSY). Residues 38–281 (QSAWNALDRE…LQDASSPVLN (244 aa)) lie on the Extracellular side of the membrane. Residues 153–228 (SEPYTDEATG…KPGTTGSGDW (76 aa)) form the Cache domain. Residues 282 to 302 (TAVIILCVSIVIGGILILYII) traverse the membrane as a helical segment. Residues 303–355 (RAITKPLRKLVSTSAKISSGDLTEVIDIHSKNEFGQLGESFNEMSASLRSVIG) form the HAMP domain. At 303-662 (RAITKPLRKL…DITKKFKIES (360 aa)) the chain is on the cytoplasmic side. At E370 the chain carries Glutamate methyl ester (Glu). The region spanning 374-610 (SAAQTSKATE…EVSSAVEDIS (237 aa)) is the Methyl-accepting transducer domain. Glutamate methyl ester (Gln) is present on Q594. E629 and E636 each carry glutamate methyl ester (Glu).

It belongs to the methyl-accepting chemotaxis (MCP) protein family.

The protein resides in the cell membrane. Its function is as follows. Chemotactic-signal transducers respond to changes in the concentration of attractants and repellents in the environment, transduce a signal from the outside to the inside of the cell, and facilitate sensory adaptation through the variation of the level of methylation. All amino acids serve as attractants in B.subtilis, they appear to cause an increase in the turnover methyl groups, leading to methylation of an unidentified acceptor, while repellents have been shown to cause a decrease in methyl group turnover. The methyl groups are added by a methyltransferase and removed by a methylesterase. The protein is Methyl-accepting chemotaxis protein TlpB (tlpB) of Bacillus subtilis (strain 168).